Here is a 514-residue protein sequence, read N- to C-terminus: Alanine--glyoxylate aminotransferase 2, mitochondrial (514 aa).

The transit peptide at 1-41 directs the protein to the mitochondrion; the sequence is MTLIWRHLLRPLCLVTPAPRILEMRPFLNLGASWTSVTKLS. K71 is modified (N6-acetyllysine; alternate). The residue at position 71 (K71) is an N6-succinyllysine; alternate. K84 is modified (N6-acetyllysine). K262 is modified (N6-acetyllysine; alternate). K262 is subject to N6-succinyllysine; alternate. K304 is modified (N6-succinyllysine). K350 is subject to N6-(pyridoxal phosphate)lysine. N6-acetyllysine; alternate is present on K420. An N6-succinyllysine; alternate modification is found at K420.

Belongs to the class-III pyridoxal-phosphate-dependent aminotransferase family. As to quaternary structure, homotetramer. Pyridoxal 5'-phosphate is required as a cofactor.

The protein localises to the mitochondrion. The enzyme catalyses glyoxylate + L-alanine = glycine + pyruvate. It catalyses the reaction (R)-3-amino-2-methylpropanoate + pyruvate = 2-methyl-3-oxopropanoate + L-alanine. It carries out the reaction 3-oxopropanoate + L-alanine = beta-alanine + pyruvate. The catalysed reaction is 2-oxobutanoate + L-alanine = (2S)-2-aminobutanoate + pyruvate. The enzyme catalyses N(omega),N(omega)-dimethyl-L-arginine + pyruvate = 5-(3,3-dimethylguanidino)-2-oxopentanoate + L-alanine. It catalyses the reaction N(omega),N('omega)-dimethyl-L-arginine + pyruvate = 5-(3,3'-dimethylguanidino)-2-oxopentanoate + L-alanine. It carries out the reaction N(omega),N(omega)-dimethyl-L-arginine + glyoxylate = 5-(3,3-dimethylguanidino)-2-oxopentanoate + glycine. The catalysed reaction is N(omega),N('omega)-dimethyl-L-arginine + glyoxylate = 5-(3,3'-dimethylguanidino)-2-oxopentanoate + glycine. The enzyme catalyses N(omega)-methyl-L-arginine + pyruvate = 5-(3-methylguanidino)-2-oxopentanoate + L-alanine. It catalyses the reaction N(omega)-methyl-L-arginine + glyoxylate = 5-(3-methylguanidino)-2-oxopentanoate + glycine. It carries out the reaction L-ornithine + pyruvate = 5-amino-2-oxopentanoate + L-alanine. The catalysed reaction is L-ornithine + glyoxylate = 5-amino-2-oxopentanoate + glycine. The enzyme catalyses (2S)-2-aminobutanoate + glyoxylate = 2-oxobutanoate + glycine. It catalyses the reaction N(omega),N(omega)-dimethyl-L-arginine + oxaloacetate = 5-(3,3-dimethylguanidino)-2-oxopentanoate + L-aspartate. It carries out the reaction oxaloacetate + L-alanine = L-aspartate + pyruvate. The catalysed reaction is N(omega),N(omega)-dimethyl-L-arginine + 2-oxobutanoate = 5-(3,3-dimethylguanidino)-2-oxopentanoate + (2S)-2-aminobutanoate. The enzyme catalyses 2-oxopentanoate + N(omega),N(omega)-dimethyl-L-arginine = 5-(3,3-dimethylguanidino)-2-oxopentanoate + L-2-aminopentanoate. It catalyses the reaction 2-oxohexanoate + N(omega),N(omega)-dimethyl-L-arginine = L-2-aminohexanoate + 5-(3,3-dimethylguanidino)-2-oxopentanoate. Functionally, multifunctional aminotransferase with a broad substrate specificity. Catalyzes the conversion of glyoxylate to glycine using alanine as the amino donor. Catalyzes metabolism of not L- but the D-isomer of D-beta-aminoisobutyric acid to generate 2-methyl-3-oxopropanoate and alanine. Catalyzes the transfer of the amino group from beta-alanine to pyruvate to yield L-alanine and 3-oxopropanoate. Can metabolize NG-monomethyl-L-arginine (NMMA), asymmetric NG,NG-dimethyl-L-arginine (ADMA) and symmetric NG,N'G-dimethyl-L-arginine (SDMA). ADMA is a potent inhibitor of nitric-oxide (NO) synthase, and this activity provides mechanism through which the kidney regulates blood pressure. The protein is Alanine--glyoxylate aminotransferase 2, mitochondrial (AGXT2) of Pongo abelii (Sumatran orangutan).